A 439-amino-acid chain; its full sequence is Trigger factor (439 aa).

Residues 170–255 (GDTVVIDFDG…IHELKKLETP (86 aa)) form the PPIase FKBP-type domain.

Belongs to the FKBP-type PPIase family. Tig subfamily.

It localises to the cytoplasm. The enzyme catalyses [protein]-peptidylproline (omega=180) = [protein]-peptidylproline (omega=0). Its function is as follows. Involved in protein export. Acts as a chaperone by maintaining the newly synthesized protein in an open conformation. Functions as a peptidyl-prolyl cis-trans isomerase. This chain is Trigger factor, found in Oenococcus oeni (strain ATCC BAA-331 / PSU-1).